The following is a 173-amino-acid chain: Lactoylglutathione lyase (173 aa).

The VOC domain occupies 24–170 (VFNHTMLRVK…DGYWVEVIQP (147 aa)). Residue His27 participates in Ni(2+) binding. Substrate is bound at residue Arg31. Glu93 provides a ligand contact to Ni(2+). Positions 97, 116, and 120 each coordinate substrate. His120 and Glu166 together coordinate Ni(2+). Glu166 acts as the Proton donor/acceptor in catalysis.

This sequence belongs to the glyoxalase I family. Monomer. The cofactor is Ni(2+). Requires Zn(2+) as cofactor.

It catalyses the reaction (R)-S-lactoylglutathione = methylglyoxal + glutathione. The protein operates within secondary metabolite metabolism; methylglyoxal degradation; (R)-lactate from methylglyoxal: step 1/2. Functionally, catalyzes the conversion of hemimercaptal, formed from methylglyoxal and glutathione, to S-lactoylglutathione. The protein is Lactoylglutathione lyase (gloA) of Pseudomonas putida (Arthrobacter siderocapsulatus).